The primary structure comprises 504 residues: MKNEKRKTGMEPKVFFPPLIIVGILCWLTVRDLDAANVVINAVFSYVTNVWGWAFEWYMVVMLFGWFWLVFGPYAKKRLGNEPPEFSTASWIFMMFASCTSAAVLFWGSIEIYYYISTPPFGLEPNSTGAKELGLAYSLFHWGPLPWATYSFLSVAFAYFFFVRKMEVIRPSSTLVPLVGEKHAKGLFGTIVDNFYLVALIFAMGTSLGLATPLVTECMQWLFGIPHTLQLDAIIITCWIILNAICVACGLQKGGRIASDVPSYLSFLMLGWVFIVSGASFIMNYFTDSVGMLLMYLPRMLFYTDPIAKGGFPQGWSVFYWAWWVIYAIQMSIFLARISRGRTVRELCFGMVLGLTASTWILWTVLGSNTLLLIDKNIINIPNLIEQYGVARAIIETWAALPLSTATMWGFFILCFIATVTLVNACSYTLAMSTCREVRGGEEPPLLVRIGWSILVGIIGIVLLALGGLKPIQTAIIAGGCPLFFVNIMVTLSFIKDAKQNWKD.

The next 12 membrane-spanning stretches (helical) occupy residues 10 to 30 (MEPK…WLTV), 51 to 71 (WGWA…WLVF), 92 to 112 (IFMM…SIEI), 143 to 163 (GPLP…FFFV), 195 to 215 (FYLV…TPLV), 231 to 251 (LDAI…ACGL), 263 to 283 (SYLS…SFIM), 316 to 336 (WSVF…IFLA), 347 to 367 (LCFG…TVLG), 398 to 418 (WAAL…CFIA), 446 to 466 (LLVR…LLAL), and 475 to 495 (AIIA…LSFI).

Belongs to the BCCT transporter (TC 2.A.15) family. CaiT subfamily. As to quaternary structure, homotrimer.

It localises to the cell inner membrane. The catalysed reaction is 4-(trimethylamino)butanoate(in) + (R)-carnitine(out) = 4-(trimethylamino)butanoate(out) + (R)-carnitine(in). It participates in amine and polyamine metabolism; carnitine metabolism. Functionally, catalyzes the exchange of L-carnitine for gamma-butyrobetaine. The polypeptide is L-carnitine/gamma-butyrobetaine antiporter (Shigella dysenteriae serotype 1 (strain Sd197)).